Here is a 130-residue protein sequence, read N- to C-terminus: Probable 4-amino-4-deoxy-L-arabinose-phosphoundecaprenol flippase subunit ArnF (130 aa).

The Cytoplasmic segment spans residues 1-4; sequence MRGY. The chain crosses the membrane as a helical span at residues 5-25; it reads AWGAASVLLVTLAQLLMKWGM. Over 26–47 the chain is Periplasmic; that stretch reads AQIPLMSFADVTLNLFMQYWLP. The helical transmembrane segment at 48–68 threads the bilayer; it reads LVVVSGGIFGYALSMLCWFFA. Over 69–77 the chain is Cytoplasmic; that stretch reads LHHLPLNRA. The helical transmembrane segment at 78 to 98 threads the bilayer; that stretch reads YPLLSVSYALVYLAAVILPWF. Position 99 (asparagine 99) is a topological domain, periplasmic. A helical membrane pass occupies residues 100–120; that stretch reads ESATLLKTLGTLFILFGVWLI. At 121 to 130 the chain is on the cytoplasmic side; it reads NSQAKVKTPQ.

Belongs to the ArnF family. As to quaternary structure, heterodimer of ArnE and ArnF.

It is found in the cell inner membrane. It functions in the pathway bacterial outer membrane biogenesis; lipopolysaccharide biosynthesis. Its function is as follows. Translocates 4-amino-4-deoxy-L-arabinose-phosphoundecaprenol (alpha-L-Ara4N-phosphoundecaprenol) from the cytoplasmic to the periplasmic side of the inner membrane. This chain is Probable 4-amino-4-deoxy-L-arabinose-phosphoundecaprenol flippase subunit ArnF, found in Serratia proteamaculans (strain 568).